Here is a 376-residue protein sequence, read N- to C-terminus: Probable plastid-lipid-associated protein 3, chloroplastic (376 aa).

A chloroplast-targeting transit peptide spans 1–53 (MATLFTVARPSSLLYVSSINPSKTFSPSISLKLNSLSFSFGYRPKPLRFSKIR). Residues 54–146 (SSLPSESESE…EADAGNGSAV (93 aa)) are disordered. The segment covering 85-96 (PDSQPDNVTVNV) has biased composition (polar residues). The segment covering 117 to 126 (MESDPPRNED) has biased composition (basic and acidic residues).

The protein belongs to the PAP/fibrillin family.

The protein localises to the plastid. Its subcellular location is the chloroplast. It is found in the plastoglobule. Probably involved in light/cold stress-related jasmonate (JA) biosynthesis. The protein is Probable plastid-lipid-associated protein 3, chloroplastic (PAP3) of Arabidopsis thaliana (Mouse-ear cress).